A 229-amino-acid polypeptide reads, in one-letter code: Heptaprenylglyceryl phosphate synthase (229 aa).

Position 12 (lysine 12) interacts with sn-glycerol 1-phosphate. 2 residues coordinate Mg(2+): aspartate 14 and serine 40. Residues tyrosine 159–glycine 164, glycine 189, and glycine 209–asparagine 210 each bind sn-glycerol 1-phosphate.

It belongs to the GGGP/HepGP synthase family. Group I subfamily. In terms of assembly, homodimer. Requires Mg(2+) as cofactor.

It carries out the reaction sn-glycerol 1-phosphate + all-trans-heptaprenyl diphosphate = 3-heptaprenyl-sn-glycero-1-phosphate + diphosphate. It functions in the pathway membrane lipid metabolism; glycerophospholipid metabolism. In terms of biological role, prenyltransferase that catalyzes in vivo the transfer of the heptaprenyl moiety of heptaprenyl pyrophosphate (HepPP; 35 carbon atoms) to the C3 hydroxyl of sn-glycerol-1-phosphate (G1P), producing heptaprenylglyceryl phosphate (HepGP). This reaction is an ether-bond-formation step in the biosynthesis of archaea-type G1P-based membrane lipids found in Bacillales. The chain is Heptaprenylglyceryl phosphate synthase from Bacillus cereus (strain AH187).